Here is a 1040-residue protein sequence, read N- to C-terminus: Multidrug resistance protein MdtB (1040 aa).

Transmembrane regions (helical) follow at residues 15 to 37, 345 to 362, 367 to 389, 396 to 418, 438 to 460, 472 to 494, 535 to 557, 867 to 889, 909 to 931, 968 to 990, and 1000 to 1022; these read LFILRPVATTLLMAAILLAGIIG, FELMLAIALVVMIIYLFL, ATIIPGVAVPLSLIGTFAVMVFL, LTLMALTIATGFVVDDAIVVIEN, GEIGFTIISLTFSLIAVLIPLLF, FAVTLAVAILISAVVSLTLTPMM, HPWLTLSVAFATLLLSVMLWIVI, VWLIVAAVVAMYIVLGVLYESFI, LIIAGSELDIIAIIGIILLIGIV, ILMTTLAALLGALPLMLSTGVGT, and MVGGLLVSQVLTLFTTPVIYLLF.

Belongs to the resistance-nodulation-cell division (RND) (TC 2.A.6) family. MdtB subfamily. As to quaternary structure, part of a tripartite efflux system composed of MdtA, MdtB and MdtC. MdtB forms a heteromultimer with MdtC.

It is found in the cell inner membrane. The protein is Multidrug resistance protein MdtB of Salmonella typhimurium (strain LT2 / SGSC1412 / ATCC 700720).